The following is a 977-amino-acid chain: MDEELYSRQLYVLGLPAMQRIQEAKVLLCGLQGLGAEVAKNLVLTGVGSLTLHDPHPTCWADLAAQCFLSEESLGRNRAEASQAQLAQLNEAVQISVHSGDITEDLLQGFQVVVLTDSKLEDQLKVGPLCHKHGVRFLMAETRGLVGRLFCDFGEDFTVLDPTEVEPMTAAIQDISQGFPGIVTLRGDTKRHSFHDGDLVIFSDIEGMVELNSCSPQSVRVQKDGSLEIGDTTTFSRYLRGGVVTEVKRPKTVRHKPLDIALLQPHVVAQNTQEVQRAHCLHQAFHVLHKFQQLHGRLPKPWDPDDAETVVELAQDLEPLKGTEEESLDEALLRTIALSSAGTLSPMAAIMGGVAAQEVLKAISRKFMPLDQWLYFDALECLPEDETLLPSPEDCQPRNCRYDGQIAVFGTDLQEKLSDQHYLLVGAGAIGCEMLKVFALVGLGVRANGGVTVADMDYIERSNLSRQFLFRPKDVRRPKAEVAAAAAHRLNPDLRATPYTCPLDPTTEDIYDDSFFSRVNGVVAALDSFQARHYVAARCTHYLKPLLEAGTQGTWGSASVFVPYVTEAYRGPASDAASEDAPYPVCTLRHIPSSMEHSVQWAQDQFEGLFRLSTETINCYQQTCTSLSATDRTETLALLQQVMGVLRTRPQTWQDCVVWALGHWQLCFHDKVLEGGTQFSSGSNKCPHPLQFDPNHDMHFLYVLAAANLYARMHGLPGSQSQPALRELLTRLLESDSRPQNLFSAEHGQEQLKELQETLDDWRKGPPLKPVLFVKDDDSNFHVDFVVAATDLRCQNYGILPVNHARIKQIVGRIIPAIATSTAVVAGLLGLELYKVVSGLRSHGTFRHSYLHLAENHFIRSAPSAPAVQSFRDLKWTCWDRLKVPAVQPERTLKSLLAHLQEEHGLKVEMLLHHQALLYSSGWSSEKQAQHLCLRVTELVQHVTGWKPKPGLKVLVFELSCEGEEEEMAFPPLHYEL.

The protein belongs to the ubiquitin-activating E1 family. Post-translationally, ubiquitinated by RNF170.

Its subcellular location is the cytoplasm. It localises to the nucleus. The protein operates within protein modification; protein ubiquitination. Functionally, E1-activating enzyme that catalyzes the covalent conjugation of the ubiquitin-like protein product of ISG15 to additional interferons stimulated proteins (ISGs) as well as other cellular proteins such as P53 in a process termed protein ISGylation. Plays an essential role in antiviral immunity together with ISG15 by restricting the replication of many viruses including rabies virus, influenza virus, sindbis virus or rotavirus. The protein is Ubiquitin-like modifier-activating enzyme 7 of Mus musculus (Mouse).